A 54-amino-acid chain; its full sequence is Ribulose bisphosphate carboxylase large chain (54 aa).

The propeptide occupies Met1 to Ser2. Pro3 is subject to N-acetylproline. Lys14 bears the N6,N6,N6-trimethyllysine mark.

Belongs to the RuBisCO large chain family. Type I subfamily. In terms of assembly, heterohexadecamer of 8 large chains and 8 small chains.

The protein localises to the plastid. It localises to the chloroplast. The enzyme catalyses 2 (2R)-3-phosphoglycerate + 2 H(+) = D-ribulose 1,5-bisphosphate + CO2 + H2O. It catalyses the reaction D-ribulose 1,5-bisphosphate + O2 = 2-phosphoglycolate + (2R)-3-phosphoglycerate + 2 H(+). In terms of biological role, ruBisCO catalyzes two reactions: the carboxylation of D-ribulose 1,5-bisphosphate, the primary event in carbon dioxide fixation, as well as the oxidative fragmentation of the pentose substrate in the photorespiration process. Both reactions occur simultaneously and in competition at the same active site. The chain is Ribulose bisphosphate carboxylase large chain (rbcL) from Ilex aquifolium (English holly).